The chain runs to 324 residues: Probable acrylyl-CoA reductase AcuI (324 aa).

Residues Y41, 156 to 159 (SGGV), 178 to 180 (SGR), R198, L242, I256, S267, and N313 contribute to the NADP(+) site.

The protein belongs to the zinc-containing alcohol dehydrogenase family. Acrylyl-CoA reductase subfamily. As to quaternary structure, homodimer.

The protein resides in the cytoplasm. It carries out the reaction propanoyl-CoA + NADP(+) = acryloyl-CoA + NADPH + H(+). Its function is as follows. Probably catalyzes the NADPH-dependent reduction of acrylyl-CoA to propanoyl-CoA. This Escherichia coli (strain K12) protein is Probable acrylyl-CoA reductase AcuI (acuI).